The primary structure comprises 353 residues: Photosystem II protein D1 (353 aa).

Residue T2 is modified to N-acetylthreonine. T2 is subject to Phosphothreonine. 3 consecutive transmembrane segments (helical) span residues 29–46, 118–133, and 142–156; these read YIGW…TATS, HFLL…EWEL, and WIAV…AATA. H118 contacts chlorophyll a. Y126 lines the pheophytin a pocket. Positions 170 and 189 each coordinate [CaMn4O5] cluster. A helical transmembrane segment spans residues 197 to 218; sequence FHMLGVAGVFGGSLFSAMHGSL. Chlorophyll a is bound at residue H198. Residues H215 and 264-265 contribute to the a quinone site; that span reads SF. Residue H215 participates in Fe cation binding. H272 contributes to the Fe cation binding site. The chain crosses the membrane as a helical span at residues 274-288; the sequence is FLAAWPVVGIWFTAL. Residues H332, E333, D342, and A344 each coordinate [CaMn4O5] cluster. A propeptide spanning residues 345–353 is cleaved from the precursor; it reads AVEAPSING.

The protein belongs to the reaction center PufL/M/PsbA/D family. PSII is composed of 1 copy each of membrane proteins PsbA, PsbB, PsbC, PsbD, PsbE, PsbF, PsbH, PsbI, PsbJ, PsbK, PsbL, PsbM, PsbT, PsbX, PsbY, PsbZ, Psb30/Ycf12, at least 3 peripheral proteins of the oxygen-evolving complex and a large number of cofactors. It forms dimeric complexes. The D1/D2 heterodimer binds P680, chlorophylls that are the primary electron donor of PSII, and subsequent electron acceptors. It shares a non-heme iron and each subunit binds pheophytin, quinone, additional chlorophylls, carotenoids and lipids. D1 provides most of the ligands for the Mn4-Ca-O5 cluster of the oxygen-evolving complex (OEC). There is also a Cl(-1) ion associated with D1 and D2, which is required for oxygen evolution. The PSII complex binds additional chlorophylls, carotenoids and specific lipids. is required as a cofactor. Tyr-161 forms a radical intermediate that is referred to as redox-active TyrZ, YZ or Y-Z. In terms of processing, C-terminally processed by CTPA; processing is essential to allow assembly of the oxygen-evolving complex and thus photosynthetic growth.

The protein resides in the plastid. Its subcellular location is the chloroplast thylakoid membrane. The catalysed reaction is 2 a plastoquinone + 4 hnu + 2 H2O = 2 a plastoquinol + O2. Its function is as follows. Photosystem II (PSII) is a light-driven water:plastoquinone oxidoreductase that uses light energy to abstract electrons from H(2)O, generating O(2) and a proton gradient subsequently used for ATP formation. It consists of a core antenna complex that captures photons, and an electron transfer chain that converts photonic excitation into a charge separation. The D1/D2 (PsbA/PsbD) reaction center heterodimer binds P680, the primary electron donor of PSII as well as several subsequent electron acceptors. This Illicium oligandrum (Star anise) protein is Photosystem II protein D1.